The chain runs to 568 residues: Small ribosomal subunit protein bS1 (568 aa).

S1 motif domains follow at residues 39–100 (KTVV…LSRE), 118–184 (GEFV…VSRR), 205–273 (GMVL…LGIK), 290–360 (GKQM…LSIK), 377–447 (GTII…LGIK), and 464–533 (GTIV…LSVK).

This sequence belongs to the bacterial ribosomal protein bS1 family.

Functionally, binds mRNA; thus facilitating recognition of the initiation point. It is needed to translate mRNA with a short Shine-Dalgarno (SD) purine-rich sequence. The polypeptide is Small ribosomal subunit protein bS1 (rpsA) (Rickettsia conorii (strain ATCC VR-613 / Malish 7)).